The primary structure comprises 268 residues: Energy-coupling factor transporter transmembrane protein EcfT (268 aa).

A run of 6 helical transmembrane segments spans residues 26-46, 47-67, 73-93, 116-136, 151-171, and 246-266; these read ILAV…LSYG, ILIG…GLLL, LWII…GEAL, LVLL…IVLT, VPAH…PTLL, and ALTG…RWGI.

It belongs to the energy-coupling factor EcfT family. As to quaternary structure, forms a stable energy-coupling factor (ECF) transporter complex composed of 2 membrane-embedded substrate-binding proteins (S component), 2 ATP-binding proteins (A component) and 2 transmembrane proteins (T component). May be able to interact with more than 1 S component at a time.

The protein localises to the cell membrane. Its function is as follows. Transmembrane (T) component of an energy-coupling factor (ECF) ABC-transporter complex. Unlike classic ABC transporters this ECF transporter provides the energy necessary to transport a number of different substrates. In Acidaminococcus fermentans (strain ATCC 25085 / DSM 20731 / CCUG 9996 / CIP 106432 / VR4), this protein is Energy-coupling factor transporter transmembrane protein EcfT.